A 419-amino-acid chain; its full sequence is Serine hydroxymethyltransferase (419 aa).

Residues L121 and 125–127 (GHL) each bind (6S)-5,6,7,8-tetrahydrofolate. K230 is modified (N6-(pyridoxal phosphate)lysine). 355–357 (SPF) contributes to the (6S)-5,6,7,8-tetrahydrofolate binding site.

Belongs to the SHMT family. In terms of assembly, homodimer. It depends on pyridoxal 5'-phosphate as a cofactor.

The protein localises to the cytoplasm. It catalyses the reaction (6R)-5,10-methylene-5,6,7,8-tetrahydrofolate + glycine + H2O = (6S)-5,6,7,8-tetrahydrofolate + L-serine. Its pathway is one-carbon metabolism; tetrahydrofolate interconversion. It participates in amino-acid biosynthesis; glycine biosynthesis; glycine from L-serine: step 1/1. Functionally, catalyzes the reversible interconversion of serine and glycine with tetrahydrofolate (THF) serving as the one-carbon carrier. This reaction serves as the major source of one-carbon groups required for the biosynthesis of purines, thymidylate, methionine, and other important biomolecules. Also exhibits THF-independent aldolase activity toward beta-hydroxyamino acids, producing glycine and aldehydes, via a retro-aldol mechanism. The chain is Serine hydroxymethyltransferase from Streptococcus equi subsp. equi (strain 4047).